A 359-amino-acid chain; its full sequence is Probable dual-specificity RNA methyltransferase RlmN (359 aa).

Catalysis depends on Glu-93, which acts as the Proton acceptor. The 231-residue stretch at 107-337 folds into the Radical SAM core domain; the sequence is KSERVTLCVS…VTMRYEKGHD (231 aa). A disulfide bridge connects residues Cys-114 and Cys-342. The [4Fe-4S] cluster site is built by Cys-121, Cys-125, and Cys-128. S-adenosyl-L-methionine is bound by residues 168 to 169, Ser-200, 223 to 225, and Asn-299; these read GE and SLH. The S-methylcysteine intermediate role is filled by Cys-342.

This sequence belongs to the radical SAM superfamily. RlmN family. [4Fe-4S] cluster serves as cofactor.

Its subcellular location is the cytoplasm. It carries out the reaction adenosine(2503) in 23S rRNA + 2 reduced [2Fe-2S]-[ferredoxin] + 2 S-adenosyl-L-methionine = 2-methyladenosine(2503) in 23S rRNA + 5'-deoxyadenosine + L-methionine + 2 oxidized [2Fe-2S]-[ferredoxin] + S-adenosyl-L-homocysteine. It catalyses the reaction adenosine(37) in tRNA + 2 reduced [2Fe-2S]-[ferredoxin] + 2 S-adenosyl-L-methionine = 2-methyladenosine(37) in tRNA + 5'-deoxyadenosine + L-methionine + 2 oxidized [2Fe-2S]-[ferredoxin] + S-adenosyl-L-homocysteine. Its function is as follows. Specifically methylates position 2 of adenine 2503 in 23S rRNA and position 2 of adenine 37 in tRNAs. This chain is Probable dual-specificity RNA methyltransferase RlmN, found in Akkermansia muciniphila (strain ATCC BAA-835 / DSM 22959 / JCM 33894 / BCRC 81048 / CCUG 64013 / CIP 107961 / Muc).